Consider the following 215-residue polypeptide: Pyridoxine/pyridoxamine 5'-phosphate oxidase (215 aa).

Residues 9–12 and Lys67 each bind substrate; that span reads RKEY. Residues 62–67, 77–78, Lys84, and Gln106 each bind FMN; these read RIVLLK and YT. Substrate is bound by residues Tyr124, Arg128, and Ser132. Residues 141–142 and Trp187 contribute to the FMN site; that span reads QS. 193-195 contacts substrate; that stretch reads RLH. Arg197 serves as a coordination point for FMN.

The protein belongs to the pyridoxamine 5'-phosphate oxidase family. In terms of assembly, homodimer. FMN is required as a cofactor.

It carries out the reaction pyridoxamine 5'-phosphate + O2 + H2O = pyridoxal 5'-phosphate + H2O2 + NH4(+). It catalyses the reaction pyridoxine 5'-phosphate + O2 = pyridoxal 5'-phosphate + H2O2. It functions in the pathway cofactor metabolism; pyridoxal 5'-phosphate salvage; pyridoxal 5'-phosphate from pyridoxamine 5'-phosphate: step 1/1. The protein operates within cofactor metabolism; pyridoxal 5'-phosphate salvage; pyridoxal 5'-phosphate from pyridoxine 5'-phosphate: step 1/1. Functionally, catalyzes the oxidation of either pyridoxine 5'-phosphate (PNP) or pyridoxamine 5'-phosphate (PMP) into pyridoxal 5'-phosphate (PLP). The protein is Pyridoxine/pyridoxamine 5'-phosphate oxidase of Cytophaga hutchinsonii (strain ATCC 33406 / DSM 1761 / CIP 103989 / NBRC 15051 / NCIMB 9469 / D465).